Consider the following 409-residue polypeptide: Probable peptidoglycan glycosyltransferase FtsW (409 aa).

Helical transmembrane passes span 42–62 (LFTLAMALLAFGFVMVTSASL), 72–92 (PFHFAIRHGIYILISLAVMLA), 108–128 (LLLLGLIMLLMVLVVGYEVNG), 135–155 (VGPITFQAAEVAKLFFCIYMA), 178–198 (LLFIAAVLLLMQPDFGTVVVL), 213–233 (LWQFFAVFITCVLALILLIIV), 303–323 (FLGVLAVIATVLMLVWRALII), 337–357 (YLAYGIGIWFSIQAFVNIGVA), and 368–388 (LPLVSYGGNSLIISALAVGLL).

This sequence belongs to the SEDS family. FtsW subfamily.

Its subcellular location is the cell inner membrane. It carries out the reaction [GlcNAc-(1-&gt;4)-Mur2Ac(oyl-L-Ala-gamma-D-Glu-L-Lys-D-Ala-D-Ala)](n)-di-trans,octa-cis-undecaprenyl diphosphate + beta-D-GlcNAc-(1-&gt;4)-Mur2Ac(oyl-L-Ala-gamma-D-Glu-L-Lys-D-Ala-D-Ala)-di-trans,octa-cis-undecaprenyl diphosphate = [GlcNAc-(1-&gt;4)-Mur2Ac(oyl-L-Ala-gamma-D-Glu-L-Lys-D-Ala-D-Ala)](n+1)-di-trans,octa-cis-undecaprenyl diphosphate + di-trans,octa-cis-undecaprenyl diphosphate + H(+). Its pathway is cell wall biogenesis; peptidoglycan biosynthesis. Its function is as follows. Peptidoglycan polymerase that is essential for cell division. This Idiomarina loihiensis (strain ATCC BAA-735 / DSM 15497 / L2-TR) protein is Probable peptidoglycan glycosyltransferase FtsW.